Consider the following 498-residue polypeptide: Pyridine nucleotide-disulfide oxidoreductase domain-containing protein 1 (498 aa).

N-acetylmethionine is present on M1.

It belongs to the class-I pyridine nucleotide-disulfide oxidoreductase family. PYROXD1 subfamily. FAD serves as cofactor.

The protein localises to the nucleus. It localises to the cytoplasm. The protein resides in the myofibril. Its subcellular location is the sarcomere. Functionally, probable FAD-dependent oxidoreductase; involved in the cellular oxidative stress response. Required for normal sarcomere structure and muscle fiber integrity. The polypeptide is Pyridine nucleotide-disulfide oxidoreductase domain-containing protein 1 (Pyroxd1) (Rattus norvegicus (Rat)).